Here is a 160-residue protein sequence, read N- to C-terminus: MGRDLGWCFFVATVLLAAVLLPAPTIAGRLELKNEISGVASVRKAKLAVRCWSNEDDLGWNMLKPKQSRIWKFTTMNMWPFQKTEFRCQFRSGFGTTNEDVVTVFSVKDGFRKQCGVGGDECFWVAKRDGFYLRRIVKDGGGDSRKKYVDVLKSKWVWKW.

The N-terminal stretch at Met-1–Ala-27 is a signal peptide.

The protein belongs to the plant self-incompatibility (S1) protein family.

It localises to the secreted. The chain is S-protein homolog 13 from Arabidopsis thaliana (Mouse-ear cress).